The following is a 320-amino-acid chain: o-succinylbenzoate synthase (320 aa).

K133 functions as the Proton donor in the catalytic mechanism. Mg(2+) contacts are provided by D161, E190, and D213. Residue K235 is the Proton acceptor of the active site.

The protein belongs to the mandelate racemase/muconate lactonizing enzyme family. MenC type 1 subfamily. Requires a divalent metal cation as cofactor.

It catalyses the reaction (1R,6R)-6-hydroxy-2-succinyl-cyclohexa-2,4-diene-1-carboxylate = 2-succinylbenzoate + H2O. Its pathway is quinol/quinone metabolism; 1,4-dihydroxy-2-naphthoate biosynthesis; 1,4-dihydroxy-2-naphthoate from chorismate: step 4/7. The protein operates within quinol/quinone metabolism; menaquinone biosynthesis. Converts 2-succinyl-6-hydroxy-2,4-cyclohexadiene-1-carboxylate (SHCHC) to 2-succinylbenzoate (OSB). This chain is o-succinylbenzoate synthase, found in Escherichia coli O6:H1 (strain CFT073 / ATCC 700928 / UPEC).